The primary structure comprises 222 residues: MINTKALRQEQIAKAQQVICYDDFSPPKLIAGADVGFERQGAITRAAIAVLSYPALELVEYQIARIETTLPYIPGLLSFREYPALMAAWQLLKYKPDLVMVDGHGIAHPRRLGVASHFGLLANVPTIGVAKRRLCGESELLGEQPGSCQPLLDKEEQIGWVWRSKKRCNPLYISTGHRISLDSALLWVERCMKGYRLPETTRWADGIASNRPFFEQMIQKNP.

Residues aspartate 34 and aspartate 102 each coordinate Mg(2+).

It belongs to the endonuclease V family. Mg(2+) is required as a cofactor.

Its subcellular location is the cytoplasm. It carries out the reaction Endonucleolytic cleavage at apurinic or apyrimidinic sites to products with a 5'-phosphate.. In terms of biological role, DNA repair enzyme involved in the repair of deaminated bases. Selectively cleaves double-stranded DNA at the second phosphodiester bond 3' to a deoxyinosine leaving behind the intact lesion on the nicked DNA. This chain is Endonuclease V, found in Photorhabdus laumondii subsp. laumondii (strain DSM 15139 / CIP 105565 / TT01) (Photorhabdus luminescens subsp. laumondii).